A 175-amino-acid chain; its full sequence is NADH dehydrogenase [ubiquinone] iron-sulfur protein 4, mitochondrial (175 aa).

A mitochondrion-targeting transit peptide spans methionine 1–leucine 42. The disordered stretch occupies residues glutamate 149–lysine 175. Serine 173 is modified (phosphoserine).

This sequence belongs to the complex I NDUFS4 subunit family. As to quaternary structure, mammalian complex I is composed of 45 different subunits. This is a component of the iron-sulfur (IP) fragment of the enzyme. Interacts with BCAP31 and TOMM40; the interaction mediates its translocation to the mitochondria; the interaction with BCAP31 is direct. In terms of processing, phosphorylated.

It is found in the mitochondrion inner membrane. Accessory subunit of the mitochondrial membrane respiratory chain NADH dehydrogenase (Complex I), that is believed not to be involved in catalysis. Complex I functions in the transfer of electrons from NADH to the respiratory chain. The immediate electron acceptor for the enzyme is believed to be ubiquinone. This chain is NADH dehydrogenase [ubiquinone] iron-sulfur protein 4, mitochondrial (NDUFS4), found in Bos taurus (Bovine).